A 131-amino-acid chain; its full sequence is Small ribosomal subunit protein uS11 (131 aa).

The protein belongs to the universal ribosomal protein uS11 family. In terms of assembly, part of the 30S ribosomal subunit. Interacts with proteins S7 and S18. Binds to IF-3.

In terms of biological role, located on the platform of the 30S subunit, it bridges several disparate RNA helices of the 16S rRNA. Forms part of the Shine-Dalgarno cleft in the 70S ribosome. In Exiguobacterium sp. (strain ATCC BAA-1283 / AT1b), this protein is Small ribosomal subunit protein uS11.